Consider the following 503-residue polypeptide: Probable cytosol aminopeptidase (503 aa).

Mn(2+)-binding residues include K274 and D279. Residue K286 is part of the active site. Mn(2+) contacts are provided by D297, D356, and E358. R360 is an active-site residue.

It belongs to the peptidase M17 family. It depends on Mn(2+) as a cofactor.

The protein localises to the cytoplasm. It catalyses the reaction Release of an N-terminal amino acid, Xaa-|-Yaa-, in which Xaa is preferably Leu, but may be other amino acids including Pro although not Arg or Lys, and Yaa may be Pro. Amino acid amides and methyl esters are also readily hydrolyzed, but rates on arylamides are exceedingly low.. It carries out the reaction Release of an N-terminal amino acid, preferentially leucine, but not glutamic or aspartic acids.. In terms of biological role, presumably involved in the processing and regular turnover of intracellular proteins. Catalyzes the removal of unsubstituted N-terminal amino acids from various peptides. In Burkholderia ambifaria (strain ATCC BAA-244 / DSM 16087 / CCUG 44356 / LMG 19182 / AMMD) (Burkholderia cepacia (strain AMMD)), this protein is Probable cytosol aminopeptidase.